A 378-amino-acid chain; its full sequence is Homoserine O-acetyltransferase (378 aa).

Positions 54–355 (NAILVCHALS…NNPAGHDSFL (302 aa)) constitute an AB hydrolase-1 domain. Catalysis depends on Ser159, which acts as the Nucleophile. Arg228 is a substrate binding site. Active-site residues include Asp318 and His351. Asp352 is a substrate binding site.

The protein belongs to the AB hydrolase superfamily. MetX family. In terms of assembly, homodimer.

It localises to the cytoplasm. It carries out the reaction L-homoserine + acetyl-CoA = O-acetyl-L-homoserine + CoA. Its pathway is amino-acid biosynthesis; L-methionine biosynthesis via de novo pathway; O-acetyl-L-homoserine from L-homoserine: step 1/1. Its function is as follows. Transfers an acetyl group from acetyl-CoA to L-homoserine, forming acetyl-L-homoserine. The chain is Homoserine O-acetyltransferase from Leptospira biflexa serovar Patoc (strain Patoc 1 / Ames).